A 142-amino-acid chain; its full sequence is Acetyltransferase SG1711 (142 aa).

The region spanning 1 to 142 is the N-acetyltransferase domain; that stretch reads MEIRVFRHDD…GKRLIEDQEY (142 aa).

It belongs to the acetyltransferase family. YpeA subfamily.

This Sodalis glossinidius (strain morsitans) protein is Acetyltransferase SG1711.